A 257-amino-acid chain; its full sequence is Acetylglutamate kinase (257 aa).

Substrate contacts are provided by residues 40–41, arginine 62, and asparagine 155; that span reads GG.

The protein belongs to the acetylglutamate kinase family. ArgB subfamily.

Its subcellular location is the cytoplasm. The catalysed reaction is N-acetyl-L-glutamate + ATP = N-acetyl-L-glutamyl 5-phosphate + ADP. Its pathway is amino-acid biosynthesis; L-arginine biosynthesis; N(2)-acetyl-L-ornithine from L-glutamate: step 2/4. Its function is as follows. Catalyzes the ATP-dependent phosphorylation of N-acetyl-L-glutamate. This is Acetylglutamate kinase from Shouchella clausii (strain KSM-K16) (Alkalihalobacillus clausii).